A 461-amino-acid polypeptide reads, in one-letter code: BSD domain-containing protein 1 (461 aa).

Phosphoserine occurs at positions 123 and 197. The BSD domain maps to 177–229; the sequence is WLSQFCLEEKKGEISELLVGSPSIRALYTKMVPAAVSHSEFWHRYFYKVHQLE. Residues 239-384 form a disordered region; it reads KQRAEQSISE…SGPEPRPPAR (146 aa). Residues 250–259 show a composition bias toward acidic residues; that stretch reads PGWEEEEEEL. The segment covering 295–318 has biased composition (low complexity); sequence LVTPVEPPTEVTPSESSESVSLVT. The residue at position 387 (Thr387) is a Phosphothreonine. Positions 398–430 are disordered; it reads VFELNSDSGKSTPSNNGKKGSSTDISEDWEKDF. The span at 402 to 421 shows a compositional bias: polar residues; it reads NSDSGKSTPSNNGKKGSSTD. Phosphoserine is present on residues Ser418, Ser419, and Ser449.

This chain is BSD domain-containing protein 1 (BSDC1), found in Bos taurus (Bovine).